The sequence spans 252 residues: tRNA1(Val) (adenine(37)-N6)-methyltransferase (252 aa).

Belongs to the methyltransferase superfamily. tRNA (adenine-N(6)-)-methyltransferase family.

The protein resides in the cytoplasm. It catalyses the reaction adenosine(37) in tRNA1(Val) + S-adenosyl-L-methionine = N(6)-methyladenosine(37) in tRNA1(Val) + S-adenosyl-L-homocysteine + H(+). In terms of biological role, specifically methylates the adenine in position 37 of tRNA(1)(Val) (anticodon cmo5UAC). In Yersinia pseudotuberculosis serotype O:3 (strain YPIII), this protein is tRNA1(Val) (adenine(37)-N6)-methyltransferase.